An 82-amino-acid chain; its full sequence is Small ribosomal subunit protein bS16 (82 aa).

This sequence belongs to the bacterial ribosomal protein bS16 family.

This Cyanothece sp. (strain PCC 7425 / ATCC 29141) protein is Small ribosomal subunit protein bS16.